A 260-amino-acid chain; its full sequence is Isopentenyl phosphate kinase (260 aa).

Residue lysine 6 to serine 10 coordinates ATP. Glycine 55 is a substrate binding site. Glycine 56 provides a ligand contact to ATP. Substrate contacts are provided by histidine 60 and glycine 159. 3 residues coordinate ATP: aspartate 180, glycine 217, and lysine 221.

This sequence belongs to the isopentenyl phosphate kinase family. As to quaternary structure, homodimer.

It carries out the reaction isopentenyl phosphate + ATP = isopentenyl diphosphate + ADP. Its function is as follows. Catalyzes the formation of isopentenyl diphosphate (IPP), the building block of all isoprenoids. Has no activity with farnesyl phosphate. This Methanocaldococcus jannaschii (strain ATCC 43067 / DSM 2661 / JAL-1 / JCM 10045 / NBRC 100440) (Methanococcus jannaschii) protein is Isopentenyl phosphate kinase.